The sequence spans 315 residues: Transcriptional regulator protein Pur-beta (315 aa).

The disordered stretch occupies residues 1–39 (MADGDSGSERGGGGPGSFQPAPRGGGGPGGEQETQELAS). N-acetylalanine is present on A2. A phosphoserine mark is found at S6 and S8. At R23 the chain carries Omega-N-methylarginine. The DNA-binding stretch occupies residues 28–254 (PGGEQETQEL…GVFLRVSEVK (227 aa)). T34 carries the post-translational modification Phosphothreonine. Residue S104 is modified to Phosphoserine. Omega-N-methylarginine is present on R155. The segment at 200–220 (DDELAGGPGGGAGGPGGGLYG) is disordered. A compositionally biased stretch (gly residues) spans 205-219 (GGPGGGAGGPGGGLY). K270 carries the N6-acetyllysine modification. The span at 288-298 (RQRDKLYERRG) shows a compositional bias: basic and acidic residues. Positions 288 to 315 (RQRDKLYERRGGGSGGGDESEGEEVDED) are disordered. R297 carries the omega-N-methylarginine modification. 2 positions are modified to phosphoserine: S301 and S307. Residues 305–315 (DESEGEEVDED) are compositionally biased toward acidic residues.

The protein belongs to the PUR DNA-binding protein family. In terms of assembly, homodimer, heterodimer with PURA and heterotrimer with PURA and YBX1/Y-box protein 1. Interacts with MYOCD and SRF. As to expression, expressed in muscle cells and in the liver.

It localises to the nucleus. Transcriptional regulator which can act as an activator or a repressor. Represses the transcription of ACTA2 in fibroblasts and smooth muscle cells via its ability to interact with the purine-rich strand of a MCAT- containing element in the 5' flanking region of the gene. Represses the transcription of MYOCD, capable of repressing all isoforms of MYOCD but the magnitude of the repressive effects is most notable for the SMC- specific isoforms. Promotes hepatic glucose production by activating the transcription of ADCY6, leading to cAMP accumulation, increased PKA activity, CREB activation, and increased transcription of PCK1 and G6PC genes. Has capacity to bind repeated elements in single-stranded DNA such as the purine-rich single strand of the PUR element located upstream of the MYC gene. Participates in transcriptional and translational regulation of alpha-MHC expression in cardiac myocytes by binding to the purine-rich negative regulatory (PNR) element. Modulates constitutive liver galectin-3 gene transcription by binding to its promoter. May play a role in the dendritic transport of a subset of mRNAs. The sequence is that of Transcriptional regulator protein Pur-beta (Purb) from Rattus norvegicus (Rat).